The primary structure comprises 209 residues: Large ribosomal subunit protein bL9 (209 aa).

The interval Glu181–Ala209 is disordered. Residues Glu197 to Ala209 show a composition bias toward acidic residues.

The protein belongs to the bacterial ribosomal protein bL9 family.

In terms of biological role, binds to the 23S rRNA. This Maricaulis maris (strain MCS10) (Caulobacter maris) protein is Large ribosomal subunit protein bL9.